A 139-amino-acid polypeptide reads, in one-letter code: Small ribosomal subunit protein bS6 (139 aa).

The segment at 97–139 (TEASPMAKAKDERDSRRSSEGERRSAPAEATEEVKETAEKAAE) is disordered. Positions 104–139 (KAKDERDSRRSSEGERRSAPAEATEEVKETAEKAAE) are enriched in basic and acidic residues.

The protein belongs to the bacterial ribosomal protein bS6 family.

Its function is as follows. Binds together with bS18 to 16S ribosomal RNA. This chain is Small ribosomal subunit protein bS6, found in Shewanella sediminis (strain HAW-EB3).